The chain runs to 364 residues: tRNA(Met) cytidine acetate ligase (364 aa).

Residues 7-20 (IAEFNPFHNGHKYL), Gly96, Asn152, and Arg175 contribute to the ATP site.

Belongs to the TmcAL family.

The protein resides in the cytoplasm. It catalyses the reaction cytidine(34) in elongator tRNA(Met) + acetate + ATP = N(4)-acetylcytidine(34) in elongator tRNA(Met) + AMP + diphosphate. Its function is as follows. Catalyzes the formation of N(4)-acetylcytidine (ac(4)C) at the wobble position of elongator tRNA(Met), using acetate and ATP as substrates. First activates an acetate ion to form acetyladenylate (Ac-AMP) and then transfers the acetyl group to tRNA to form ac(4)C34. The polypeptide is tRNA(Met) cytidine acetate ligase (Streptococcus sanguinis (strain SK36)).